A 360-amino-acid polypeptide reads, in one-letter code: Phospho-N-acetylmuramoyl-pentapeptide-transferase (360 aa).

The next 11 membrane-spanning stretches (helical) occupy residues 2 to 22, 26 to 46, 73 to 93, 97 to 117, 134 to 154, 168 to 188, 199 to 219, 236 to 256, 263 to 283, 288 to 308, and 339 to 359; these read LVWVADFLAQYFSIFSVFQYL, AILGVLTALLISLLVGPVMIR, TMGGALILVAIAVSTLLWADL, YVLITLGVTLLFGAIGWVDDW, YFWQSVFGFGAAVLLFKTAHL, ITLALGVGFVLLTYFVIVGGS, GLAIMPTVMVGGALAVFAYLS, TGELVIFLGALVGAGLGFLWF, VFMGDVGALALGAALGVVAVI, LVFFVMGGVFVMETVSVILQV, and IVRFWVITVVLVLVGLATLKI.

This sequence belongs to the glycosyltransferase 4 family. MraY subfamily. Mg(2+) is required as a cofactor.

Its subcellular location is the cell inner membrane. The enzyme catalyses UDP-N-acetyl-alpha-D-muramoyl-L-alanyl-gamma-D-glutamyl-meso-2,6-diaminopimeloyl-D-alanyl-D-alanine + di-trans,octa-cis-undecaprenyl phosphate = di-trans,octa-cis-undecaprenyl diphospho-N-acetyl-alpha-D-muramoyl-L-alanyl-D-glutamyl-meso-2,6-diaminopimeloyl-D-alanyl-D-alanine + UMP. The protein operates within cell wall biogenesis; peptidoglycan biosynthesis. Catalyzes the initial step of the lipid cycle reactions in the biosynthesis of the cell wall peptidoglycan: transfers peptidoglycan precursor phospho-MurNAc-pentapeptide from UDP-MurNAc-pentapeptide onto the lipid carrier undecaprenyl phosphate, yielding undecaprenyl-pyrophosphoryl-MurNAc-pentapeptide, known as lipid I. In Hahella chejuensis (strain KCTC 2396), this protein is Phospho-N-acetylmuramoyl-pentapeptide-transferase.